The primary structure comprises 60 residues: Histidine-rich metal-binding polypeptide (60 aa).

Residues 1–60 are disordered; that stretch reads MAHHEEQHGGHHHHHHHTHHHHYHGGEHHHHHHSSHHEEGCCSTSDSHHQEEGCCHGHHE. A compositionally biased stretch (basic residues) spans 10–35; that stretch reads GHHHHHHHTHHHHYHGGEHHHHHHSS. The span at 36 to 60 shows a compositional bias: basic and acidic residues; it reads HHEEGCCSTSDSHHQEEGCCHGHHE. 2 tandem repeats follow at residues 38–42 and 51–55. The segment at 38–55 is 2 X 5 AA repeats of E-E-G-C-C; sequence EEGCCSTSDSHHQEEGCC.

In terms of biological role, strongly binds nickel and zinc. Binds other metals less strongly: cobalt &gt; copper &gt; cadmium &gt; manganese. May act to increase, or at least to preserve, urease activity. Exact function is still unknown. The polypeptide is Histidine-rich metal-binding polypeptide (hpn) (Helicobacter pylori (strain J99 / ATCC 700824) (Campylobacter pylori J99)).